The following is an 89-amino-acid chain: Small ribosomal subunit protein uS15 (89 aa).

It belongs to the universal ribosomal protein uS15 family. As to quaternary structure, part of the 30S ribosomal subunit. Forms a bridge to the 50S subunit in the 70S ribosome, contacting the 23S rRNA.

Its function is as follows. One of the primary rRNA binding proteins, it binds directly to 16S rRNA where it helps nucleate assembly of the platform of the 30S subunit by binding and bridging several RNA helices of the 16S rRNA. Forms an intersubunit bridge (bridge B4) with the 23S rRNA of the 50S subunit in the ribosome. The sequence is that of Small ribosomal subunit protein uS15 from Pectobacterium carotovorum subsp. carotovorum (strain PC1).